The following is a 317-amino-acid chain: Acetyl-coenzyme A carboxylase carboxyl transferase subunit alpha (317 aa).

The CoA carboxyltransferase C-terminal domain occupies 40-294 (RLQKKSEELT…KQQILADLQD (255 aa)).

Belongs to the AccA family. Acetyl-CoA carboxylase is a heterohexamer composed of biotin carboxyl carrier protein (AccB), biotin carboxylase (AccC) and two subunits each of ACCase subunit alpha (AccA) and ACCase subunit beta (AccD).

The protein localises to the cytoplasm. The catalysed reaction is N(6)-carboxybiotinyl-L-lysyl-[protein] + acetyl-CoA = N(6)-biotinyl-L-lysyl-[protein] + malonyl-CoA. Its pathway is lipid metabolism; malonyl-CoA biosynthesis; malonyl-CoA from acetyl-CoA: step 1/1. Component of the acetyl coenzyme A carboxylase (ACC) complex. First, biotin carboxylase catalyzes the carboxylation of biotin on its carrier protein (BCCP) and then the CO(2) group is transferred by the carboxyltransferase to acetyl-CoA to form malonyl-CoA. This Actinobacillus pleuropneumoniae serotype 5b (strain L20) protein is Acetyl-coenzyme A carboxylase carboxyl transferase subunit alpha.